The following is a 396-amino-acid chain: Activity-regulated cytoskeleton-associated protein (396 aa).

Residues 54–78 (SKQVERELKGLHRSVGKLENNLDGY) are a coiled coil. Residues 89 to 100 (KSIKACLCRCQE) form an interaction with SH3GL1 or SH3GL3 region. An interaction with DNM2 region spans residues 195–214 (QSWVPGEDGQPSPGVDTQIF). S260 is modified (phosphoserine). Residues K268 and K269 each participate in a glycyl lysine isopeptide (Lys-Gly) (interchain with G-Cter in ubiquitin) cross-link. T278 is modified (phosphothreonine). The interval 358–396 (GLEQAAEPSVTPLPTEDETEALTPALTSESVASDRTQPE) is disordered. Residues 382–396 (ALTSESVASDRTQPE) show a composition bias toward polar residues.

It belongs to the ARC/ARG3.1 family. Homooligomer; homooligomerizes into virion-like capsids. Interacts with SH3GL1/endophilin-2, SH3GL3/endophilin-3 and DNM2/DYN2. Interacts with CAMK2B (in the kinase inactive state); leading to target ARC to inactive synapses. Interacts with PSEN1. Interacts with GRIN2A and GRIN2B; inhibiting homooligomerization. Palmitoylation anchors the protein into the membrane by allowing direct insertion into the hydrophobic core of the lipid bilayer. Post-translationally, ubiquitinated by UBE3A, leading to its degradation by the proteasome, thereby promoting AMPA receptors (AMPARs) expression at synapses. Ubiquitinated by RNF216 at Lys-268 and Lys-269 limiting ARC protein levels induced by synaptic activity and thus regulating ARC-dependent forms of synaptic plasticity. In terms of processing, phosphorylation at Ser-260 by CaMK2 prevents homooligomerization into virion-like capsids by disrupting an interaction surface essential for high-order oligomerization. Phosphorylation by CaMK2 inhibits synaptic activity. As to expression, expressed exclusively in certain parts of the brain including cortex and molecular layer of the hippocampus. Typically expressed at high level in a minority of neurons. Basal expression higher in cortex than in hippocampus, highest in visual cortex.

The protein localises to the extracellular vesicle membrane. Its subcellular location is the postsynaptic cell membrane. It localises to the synapse. The protein resides in the postsynaptic density. It is found in the early endosome membrane. The protein localises to the cell projection. Its subcellular location is the dendrite. It localises to the cytoplasm. The protein resides in the cytoskeleton. It is found in the cell cortex. The protein localises to the dendritic spine. Its subcellular location is the cytoplasmic vesicle. It localises to the secretory vesicle. The protein resides in the acrosome. It is found in the clathrin-coated vesicle membrane. Master regulator of synaptic plasticity that self-assembles into virion-like capsids that encapsulate RNAs and mediate intercellular RNA transfer in the nervous system. ARC protein is released from neurons in extracellular vesicles that mediate the transfer of ARC mRNA into new target cells, where ARC mRNA can undergo activity-dependent translation. ARC capsids are endocytosed and are able to transfer ARC mRNA into the cytoplasm of neurons. Acts as a key regulator of synaptic plasticity: required for protein synthesis-dependent forms of long-term potentiation (LTP) and depression (LTD) and for the formation of long-term memory. Regulates synaptic plasticity by promoting endocytosis of AMPA receptors (AMPARs) in response to synaptic activity: this endocytic pathway maintains levels of surface AMPARs in response to chronic changes in neuronal activity through synaptic scaling, thereby contributing to neuronal homeostasis. Acts as a postsynaptic mediator of activity-dependent synapse elimination in the developing cerebellum by mediating elimination of surplus climbing fiber synapses. Accumulates at weaker synapses, probably to prevent their undesired enhancement. This suggests that ARC-containing virion-like capsids may be required to eliminate synaptic material. Required to transduce experience into long-lasting changes in visual cortex plasticity and for long-term memory. Involved in postsynaptic trafficking and processing of amyloid-beta A4 (APP) via interaction with PSEN1. In addition to its role in synapses, also involved in the regulation of the immune system: specifically expressed in skin-migratory dendritic cells and regulates fast dendritic cell migration, thereby regulating T-cell activation. This is Activity-regulated cytoskeleton-associated protein from Rattus norvegicus (Rat).